The following is a 174-amino-acid chain: uncharacterized protein (174 aa).

Residues Thr-137–Glu-174 form a disordered region.

This is an uncharacterized protein from Acanthamoeba polyphaga (Amoeba).